The chain runs to 59 residues: Cecropin-B2 (59 aa).

The N-terminal stretch at 1 to 23 (MNFNKLFLIVILAALLLLGQTEA) is a signal peptide. L57 carries the leucine amide modification.

It belongs to the cecropin family.

The protein localises to the secreted. Its function is as follows. Cecropins have lytic and antibacterial activity against several Gram-positive and Gram-negative bacteria. This chain is Cecropin-B2 (CECB2), found in Culex pipiens pipiens (Northern house mosquito).